The chain runs to 687 residues: Fimbrin-5 (687 aa).

The 68-residue stretch at Val7–Asn74 folds into the EF-hand domain. Calponin-homology (CH) domains lie at Glu122–Met239, Leu267–Asn370, Ser392–Met498, and Glu513–Leu621. Actin-binding stretches follow at residues Glu122–Asn370 and Ser392–Leu621. The interval Glu628–Ala687 is disordered. Residues Ser649 to Glu667 show a composition bias toward polar residues.

As to quaternary structure, interacts with F-actin. Expressed in mature pollen.

It is found in the cytoplasm. The protein resides in the cytoskeleton. Its function is as follows. Cross-links actin filaments (F-actin) in a calcium independent manner. Induces the formation of actin bundles. Stabilizes and prevents F-actin depolymerization mediated by latrunculin B (LatB). In Arabidopsis thaliana (Mouse-ear cress), this protein is Fimbrin-5.